We begin with the raw amino-acid sequence, 89 residues long: uncharacterized protein (89 aa).

3 helical membrane-spanning segments follow: residues alanine 5–alanine 25, arginine 36–phenylalanine 56, and tyrosine 67–phenylalanine 87.

It localises to the cell membrane. This is an uncharacterized protein from Bacillus subtilis (strain 168).